The chain runs to 82 residues: Small ribosomal subunit protein bS16 (82 aa).

This sequence belongs to the bacterial ribosomal protein bS16 family.

In Haemophilus ducreyi (strain 35000HP / ATCC 700724), this protein is Small ribosomal subunit protein bS16.